Reading from the N-terminus, the 604-residue chain is Elongation factor 4 (604 aa).

The region spanning 4 to 186 is the tr-type G domain; sequence EFIRNFSIIA…AIVHLVPPPK (183 aa). Residues 16–21 and 133–136 each bind GTP; these read DHGKST and NKID.

The protein belongs to the TRAFAC class translation factor GTPase superfamily. Classic translation factor GTPase family. LepA subfamily.

Its subcellular location is the cell inner membrane. It carries out the reaction GTP + H2O = GDP + phosphate + H(+). In terms of biological role, required for accurate and efficient protein synthesis under certain stress conditions. May act as a fidelity factor of the translation reaction, by catalyzing a one-codon backward translocation of tRNAs on improperly translocated ribosomes. Back-translocation proceeds from a post-translocation (POST) complex to a pre-translocation (PRE) complex, thus giving elongation factor G a second chance to translocate the tRNAs correctly. Binds to ribosomes in a GTP-dependent manner. The polypeptide is Elongation factor 4 (Solibacter usitatus (strain Ellin6076)).